A 318-amino-acid chain; its full sequence is COP9 signalosome complex subunit 6 (318 aa).

The 134-residue stretch at 32–165 folds into the MPN domain; that stretch reads VALHPLVILN…VSVYESVIDI (134 aa).

It belongs to the peptidase M67A family. CSN6 subfamily. As to quaternary structure, component of the CSN complex, probably composed of cops1, cops2, cops3, cops4, cops5, cops6, cops7, cops8 and cops9.

The protein localises to the cytoplasm. The protein resides in the nucleus. Component of the COP9 signalosome complex (CSN), a complex involved in various cellular and developmental processes. The CSN complex is an essential regulator of the ubiquitin (Ubl) conjugation pathway by mediating the deneddylation of the cullin subunits of E3 ligase complexes, leading to modify the Ubl ligase activity. This chain is COP9 signalosome complex subunit 6 (cops6), found in Xenopus laevis (African clawed frog).